A 299-amino-acid chain; its full sequence is MAYNNRPDASTAFTFDNDDRFVNQQPKGPDPLSANWSYDSAIDLFSLNTMLPETFPLDIPNDMLLDPKDFPTDLFAPPADISGFAISHSGEDSLSSDQESEDQPWSPAYRVSSLDSTTPDAPTVSPRSTEKPATRRRTTTQKREQATRWSSSPEMTPQEYPVTSQATTSPAPAPVSPPAASTSRKNSRSLSTDSQTATGRNAAKRAAHNIIEKRYRTNMNAKFVALEKAMSGSGVQKPTKGGSGPASLKKSEILTNAIAYMQELQDQNAALQKELALLKQNLLPGGLWRHNKENDKFRT.

2 disordered regions span residues 1-33 (MAYN…DPLS) and 81-204 (ISGF…NAAK). Over residues 161-170 (PVTSQATTSP) the composition is skewed to low complexity. Residues 188–199 (RSLSTDSQTATG) are compositionally biased toward polar residues. Positions 203–216 (AKRAAHNIIEKRYR) are basic motif. The bHLH domain maps to 203–264 (AKRAAHNIIE…TNAIAYMQEL (62 aa)). A helix-loop-helix motif region spans residues 217-264 (TNMNAKFVALEKAMSGSGVQKPTKGGSGPASLKKSEILTNAIAYMQEL). Residues 254–281 (LTNAIAYMQELQDQNAALQKELALLKQN) are a coiled coil.

It localises to the nucleus. In terms of biological role, key transcription factors critical for hypoxia adaptation and virulence. Plays a major role in regulation of heme biosynthesis and carbohydrate metabolism early in the response to hypoxia. This chain is Transcription factor srbB, found in Aspergillus fumigatus (strain ATCC MYA-4609 / CBS 101355 / FGSC A1100 / Af293) (Neosartorya fumigata).